The chain runs to 490 residues: ABC transporter ATP-binding protein ModF (490 aa).

ABC transporter domains are found at residues Leu-4–Glu-235 and Ile-261–Ile-489. Residues Gly-36–Ser-43 and Gly-293–Ser-300 each bind ATP.

The protein belongs to the ABC transporter superfamily.

Its subcellular location is the cell inner membrane. Functionally, probably not involved in the transport of molybdenum into the cell. This chain is ABC transporter ATP-binding protein ModF (modF), found in Escherichia coli (strain K12).